Reading from the N-terminus, the 78-residue chain is Protein EcdD (78 aa).

Its function is as follows. Involved in the non-oxidative decarboxylation and detoxification of phenolic derivatives under anaerobic conditions, however the precise biochemical function in metabolism of phenolic acid is unknown. In Escherichia coli O157:H7, this protein is Protein EcdD.